Consider the following 397-residue polypeptide: Pyruvate dehydrogenase E1 component subunit alpha, mitochondrial (397 aa).

Residues His-98, Tyr-124, Arg-125, Gly-173, Val-175, Asp-204, Gly-205, Ala-206, Asn-233, and Tyr-235 each coordinate pyruvate. Positions 124, 125, 173, 175, 204, 205, 206, and 233 each coordinate thiamine diphosphate. Asp-204 is a binding site for Mg(2+). Positions 233 and 235 each coordinate Mg(2+). His-299 contacts thiamine diphosphate.

In terms of assembly, tetramer of 2 alpha and 2 beta subunits. Requires thiamine diphosphate as cofactor. Mg(2+) is required as a cofactor.

It is found in the mitochondrion matrix. It catalyses the reaction N(6)-[(R)-lipoyl]-L-lysyl-[protein] + pyruvate + H(+) = N(6)-[(R)-S(8)-acetyldihydrolipoyl]-L-lysyl-[protein] + CO2. With respect to regulation, E1 activity is regulated by phosphorylation (inactivation) and dephosphorylation (activation) of the alpha subunit. The pyruvate dehydrogenase complex catalyzes the overall conversion of pyruvate to acetyl-CoA and CO(2). It contains multiple copies of three enzymatic components: pyruvate dehydrogenase (E1), dihydrolipoamide acetyltransferase (E2) and lipoamide dehydrogenase (E3). In Pisum sativum (Garden pea), this protein is Pyruvate dehydrogenase E1 component subunit alpha, mitochondrial.